Reading from the N-terminus, the 437-residue chain is MTVLRSMKDFSSMNITASILLFVTAIAAAVIANSPAASVYQEFLSHELHFRIGGFNLLSHAGHNLTMIEFINDGLMTIFFLMVGLEIKRELLVGELSSFRKAALPFIAACGGMVVPVVIYSMVCAPGTEGGQGLAIPMATDIAFSLGVLSLLGKRVPLSLKIFLTAFAVVDDIGGILVIAIFYSSHVAYEYLLWAALLYVLLYFIGKKGATNKIFFLVVGVVIWYLFLQSGIHSTISGVILAFVIPAKPQLNVGTYIERIRRIISTFPEMGANNIVLTNQQIAKLKEVESASDRVISPLQSLEDNLHGAVNYLVLPLFAFVNAGVMFSGEGEVIGGVTLAVALGLLAGKFLGIYSFTWLAVKSGLTPMPLGMNWKNISGVALLGGIGFTVSLFIANLSFGSAHPVLLNQAKLGVLSGTVMAGILGYLVLHWVLPQRR.

The next 11 membrane-spanning stretches (helical) occupy residues 12–32 (SMNITASILLFVTAIAAAVIA), 65–85 (LTMIEFINDGLMTIFFLMVGL), 103–123 (ALPFIAACGGMVVPVVIYSMV), 133–153 (GLAIPMATDIAFSLGVLSLLG), 162–182 (IFLTAFAVVDDIGGILVIAIF), 186–206 (HVAYEYLLWAALLYVLLYFIG), 214–234 (IFFLVVGVVIWYLFLQSGIHS), 308–328 (GAVNYLVLPLFAFVNAGVMFS), 333–353 (VIGGVTLAVALGLLAGKFLGI), 377–397 (ISGVALLGGIGFTVSLFIANL), and 412–432 (LGVLSGTVMAGILGYLVLHWV).

It belongs to the NhaA Na(+)/H(+) (TC 2.A.33) antiporter family.

It localises to the cell inner membrane. It catalyses the reaction Na(+)(in) + 2 H(+)(out) = Na(+)(out) + 2 H(+)(in). In terms of biological role, na(+)/H(+) antiporter that extrudes sodium in exchange for external protons. In Bacteroides fragilis (strain YCH46), this protein is Na(+)/H(+) antiporter NhaA.